The chain runs to 390 residues: ATP phosphoribosyltransferase regulatory subunit (390 aa).

Belongs to the class-II aminoacyl-tRNA synthetase family. HisZ subfamily. As to quaternary structure, heteromultimer composed of HisG and HisZ subunits.

The protein resides in the cytoplasm. The protein operates within amino-acid biosynthesis; L-histidine biosynthesis; L-histidine from 5-phospho-alpha-D-ribose 1-diphosphate: step 1/9. Functionally, required for the first step of histidine biosynthesis. May allow the feedback regulation of ATP phosphoribosyltransferase activity by histidine. In Bacillus velezensis (strain DSM 23117 / BGSC 10A6 / LMG 26770 / FZB42) (Bacillus amyloliquefaciens subsp. plantarum), this protein is ATP phosphoribosyltransferase regulatory subunit.